The primary structure comprises 1955 residues: Rootletin (1955 aa).

Coiled-coil stretches lie at residues 29-58 (EENR…ESIE), 162-223 (EENL…QQHT), 284-1303 (LMRK…AVES), 1368-1579 (VGVT…EELR), and 1607-1863 (RRWE…RTKG). 5 disordered regions span residues 321–341 (VTEN…DLKR), 391–451 (LTTK…KKLD), 504–551 (LKER…RSLK), 907–935 (EKLN…NEAV), and 961–998 (RDLE…QKTL). Composition is skewed to basic and acidic residues over residues 326-341 (MKSE…DLKR) and 396-451 (GEID…KKLD). Composition is skewed to basic and acidic residues over residues 907-931 (EKLN…ESSK), 961-982 (RDLE…KMEL), and 989-998 (EDRKKEQKTL).

Belongs to the rootletin family. In terms of tissue distribution, expressed in head ciliated neurons.

Its subcellular location is the cytoplasm. It is found in the cytoskeleton. The protein resides in the cilium basal body. It localises to the cilium axoneme. Its function is as follows. Major structural component of the ciliary rootlet, a cytoskeletal-like structure in ciliated cells which originates from the basal body at the proximal end of a cilium and extends proximally toward the cell nucleus. Required for cilia integrity and function in sensory neurons. Maintains cilia integrity, partly by modulating the assembly and transport of intraflagellar proteins along the ciliary axoneme. Required for normal mating behavior and normal responses to environmental and chemical stimuli. This chain is Rootletin, found in Caenorhabditis elegans.